The sequence spans 306 residues: Ubiquitin-conjugating enzyme E2Q-like protein CG4502 (306 aa).

The interval 18–77 is disordered; the sequence is HKSSNNNNNNNNNHNNNINNNNNNDKVDGATGSSPNINNNNNNNNNNNNHDGAAAPSSAG. Composition is skewed to low complexity over residues 22–41 and 53–77; these read NNNN…NNNN and NINN…SSAG. In terms of domain architecture, UBC core spans 138 to 299; it reads IRTRRLMKEY…VKTHEKYGWV (162 aa). Catalysis depends on cysteine 234, which acts as the Glycyl thioester intermediate.

Belongs to the ubiquitin-conjugating enzyme family.

It catalyses the reaction S-ubiquitinyl-[E1 ubiquitin-activating enzyme]-L-cysteine + [E2 ubiquitin-conjugating enzyme]-L-cysteine = [E1 ubiquitin-activating enzyme]-L-cysteine + S-ubiquitinyl-[E2 ubiquitin-conjugating enzyme]-L-cysteine.. Its pathway is protein modification; protein ubiquitination. Functionally, catalyzes the covalent attachment of ubiquitin to other proteins. This is Ubiquitin-conjugating enzyme E2Q-like protein CG4502 from Drosophila melanogaster (Fruit fly).